Reading from the N-terminus, the 655-residue chain is A-type voltage-gated potassium channel KCND3 (655 aa).

At M1 to A182 the chain is on the cytoplasmic side. An interaction with KCNIP1 and KCNIP2 region spans residues A6 to P21. Residues E70 to D78 are interaction with KCNIP1. The Zn(2+) site is built by H104, C110, C131, and C132. Residue S153 is modified to Phosphoserine. The helical transmembrane segment at L183–T204 threads the bilayer. Residues V205–S223 lie on the Extracellular side of the membrane. Residues V224–F246 traverse the membrane as a helical segment. Residues A247 to R253 are Cytoplasmic-facing. The helical transmembrane segment at F254–T277 threads the bilayer. The Extracellular segment spans residues N278–S283. A helical; Voltage-sensor membrane pass occupies residues G284–G306. Over L307 to A318 the chain is Cytoplasmic. The helical transmembrane segment at S319–E343 threads the bilayer. The Extracellular portion of the chain corresponds to K344–T352. The helical intramembrane region spans S353–T366. The K(+) site is built by T367, L368, G369, and Y370. Positions T367–D372 match the Selectivity filter motif. The stretch at T367–V374 is an intramembrane region. A helical transmembrane segment spans residues I378–P400. Residues V401–L655 are Cytoplasmic-facing. T459 carries the phosphothreonine modification. Residues S470–T487 are interaction with KCNIP1 and KCNIP2. Residues I472 to T487 are mediates dendritic targeting. Residues M525–S548 show a composition bias toward polar residues. A disordered region spans residues M525–T565. S569 bears the Phosphoserine; by CaMK2D mark. S585 is subject to Phosphoserine. The segment at I615 to L655 is disordered. Over residues G637–S647 the composition is skewed to polar residues.

This sequence belongs to the potassium channel family. D (Shal) (TC 1.A.1.2) subfamily. Kv4.3/KCND3 sub-subfamily. Homotetramer. Heterotetramer with KCND2. Associates with the regulatory subunits KCNIP3 and KCNIP4. Interacts with KCNE1, KCNE2, SCN1B and KCNAB1 and DLG1. Component of heteromultimeric potassium channels. Identified in potassium channel complexes containing KCND1, KCND2, KCND3, KCNIP1, KCNIP2, KCNIP3, KCNIP4, DPP6 and DPP10. Interacts with KCNIP1; each KCNIP1 monomer interacts with two adjacent KCND3 subunits, through both the N-terminal inactivation ball of a KCND3 subunit and a C-terminal helix from the adjacent KCND3 subunit, clamping them together; this interaction stabilizes the tetrameric form and modulates the channel gating kinetics namely channel activation and inactivation kinetics and rate of recovery from inactivation. Interacts with DPP6; this interaction modulates the channel gating kinetics namely channel activation and inactivation kinetics and rate of recovery from inactivation. Interacts with KCNIP2; each KCNIP2 monomer interacts with two adjacent KCND3 subunits, through both the N-terminal inactivation ball of a KCND3 subunit and a C-terminal helix from the adjacent KCND3 subunit, clamping them together; this interaction modulates the channel gating kinetics. In terms of processing, regulated through phosphorylation at Ser-569 by CaMK2D. In terms of tissue distribution, highly expressed in heart and brain, in particular in cortex, cerebellum, amygdala and caudate nucleus. Detected at lower levels in liver, skeletal muscle, kidney and pancreas.

It is found in the cell membrane. The protein localises to the sarcolemma. It localises to the cell projection. The protein resides in the dendrite. The catalysed reaction is K(+)(in) = K(+)(out). In terms of biological role, pore-forming (alpha) subunit of voltage-gated A-type potassium channels that mediates transmembrane potassium transport in excitable membranes, in brain and heart. In cardiomyocytes, may generate the transient outward potassium current I(To). In neurons, may conduct the transient subthreshold somatodendritic A-type potassium current (ISA). Kinetics properties are characterized by fast activation at subthreshold membrane potentials, rapid inactivation, and quick recovery from inactivation. Channel properties are modulated by interactions with regulatory subunits. Interaction with the regulatory subunits KCNIP1 or KCNIP2 modulates the channel gating kinetics namely channel activation and inactivation kinetics and rate of recovery from inactivation. Likewise, interaction with DPP6 modulates the channel gating kinetics namely channel activation and inactivation kinetics. The polypeptide is A-type voltage-gated potassium channel KCND3 (KCND3) (Homo sapiens (Human)).